The sequence spans 204 residues: Protein LURP-one-related 14 (204 aa).

Belongs to the LOR family.

Its function is as follows. Might be related to the phospholipid scramblase and tubby-like superfamily of membrane tethered transcription factors. The protein is Protein LURP-one-related 14 of Arabidopsis thaliana (Mouse-ear cress).